The primary structure comprises 217 residues: External core antigen (217 aa).

Positions 1 to 20 (MYLFHLCLVFACVSCPTVQA) are cleaved as a signal peptide. The tract at residues 26 to 28 (GWL) is HBEAG. Over residues 181 to 210 (RRGSARVVRSPRRRTPSPRRRRSQSPRRRP) the composition is skewed to basic residues. Residues 181 to 217 (RRGSARVVRSPRRRTPSPRRRRSQSPRRRPQSPASNC) form a disordered region. The 1; half-length repeat unit spans residues 190-196 (SPRRRTP). The tract at residues 190–211 (SPRRRTPSPRRRRSQSPRRRPQ) is 3 X 8 AA approximate repeats of S-P-R-R-R-R-[PS]-Q. Positions 190–217 (SPRRRTPSPRRRRSQSPRRRPQSPASNC) are excised as a propeptide. Repeat copies occupy residues 197 to 204 (SPRRRRSQ) and 205 to 211 (SPRRRPQ).

This sequence belongs to the orthohepadnavirus precore antigen family. As to quaternary structure, homodimerizes. In terms of processing, phosphorylated. Post-translationally, cleaved by host furin.

The protein localises to the secreted. It localises to the host nucleus. Functionally, may regulate immune response to the intracellular capsid in acting as a T-cell tolerogen, by having an immunoregulatory effect which prevents destruction of infected cells by cytotoxic T-cells. This immune regulation may predispose to chronicity during perinatal infections and prevent severe liver injury during adult infections. This Urocitellus parryii kennicottii (ASHV) protein is External core antigen.